We begin with the raw amino-acid sequence, 154 residues long: Transcription antitermination protein NusB (154 aa).

It belongs to the NusB family.

Involved in transcription antitermination. Required for transcription of ribosomal RNA (rRNA) genes. Binds specifically to the boxA antiterminator sequence of the ribosomal RNA (rrn) operons. The sequence is that of Transcription antitermination protein NusB from Enterococcus faecalis (strain ATCC 700802 / V583).